The primary structure comprises 405 residues: Argininosuccinate synthase (405 aa).

Residues 10 to 18 (AYSGGLDTS) and A37 each bind ATP. 2 residues coordinate L-citrulline: Y88 and S93. G118 is an ATP binding site. L-aspartate-binding residues include T120, N124, and D125. N124 contacts L-citrulline. Residues R128, S179, S188, E264, and Y276 each coordinate L-citrulline.

Belongs to the argininosuccinate synthase family. Type 1 subfamily. In terms of assembly, homotetramer.

It localises to the cytoplasm. The catalysed reaction is L-citrulline + L-aspartate + ATP = 2-(N(omega)-L-arginino)succinate + AMP + diphosphate + H(+). It participates in amino-acid biosynthesis; L-arginine biosynthesis; L-arginine from L-ornithine and carbamoyl phosphate: step 2/3. The protein is Argininosuccinate synthase of Nitrosococcus oceani (strain ATCC 19707 / BCRC 17464 / JCM 30415 / NCIMB 11848 / C-107).